The sequence spans 281 residues: Pantothenate synthetase (281 aa).

Position 30-37 (30-37) interacts with ATP; the sequence is MGNLHQGH. His37 functions as the Proton donor in the catalytic mechanism. Gln61 is a binding site for (R)-pantoate. Gln61 is a binding site for beta-alanine. 148 to 151 contributes to the ATP binding site; it reads GQKD. Gln154 contributes to the (R)-pantoate binding site. Residues Ala177 and 185–188 contribute to the ATP site; that span reads LSSR.

It belongs to the pantothenate synthetase family. As to quaternary structure, homodimer.

The protein resides in the cytoplasm. The enzyme catalyses (R)-pantoate + beta-alanine + ATP = (R)-pantothenate + AMP + diphosphate + H(+). It functions in the pathway cofactor biosynthesis; (R)-pantothenate biosynthesis; (R)-pantothenate from (R)-pantoate and beta-alanine: step 1/1. Functionally, catalyzes the condensation of pantoate with beta-alanine in an ATP-dependent reaction via a pantoyl-adenylate intermediate. The polypeptide is Pantothenate synthetase (Acinetobacter baylyi (strain ATCC 33305 / BD413 / ADP1)).